The sequence spans 515 residues: Cyclic AMP receptor-like protein G (515 aa).

The Extracellular portion of the chain corresponds to 1–16 (MSSIIFIPNDADNINS). The chain crosses the membrane as a helical span at residues 17–37 (IMVTISSSLSLVGCLFILSIY). Residues 38-50 (IYYKELREFQLKL) are Cytoplasmic-facing. A helical transmembrane segment spans residues 51–71 (IFIMTINDFIISIIFLIATHI). The Extracellular portion of the chain corresponds to 72–92 (QTKYFDAITNVFPFFCNFPDS). A helical membrane pass occupies residues 93–113 (LLHYFFLSSFFWEVCIAHTLI). Over 114–129 (QVIKYNNDKVEDNLKK) the chain is Cytoplasmic. Residues 130–150 (YFIFSNGLSALIMVSLFFIRS) traverse the membrane as a helical segment. Topologically, residues 151–164 (YSKIDCHHDSIFPH) are extracellular. A helical membrane pass occupies residues 165 to 185 (LLFFIPLLLTWIYNIIVCALL). The Cytoplasmic segment spans residues 186-276 (TKTFKEQAMN…IRKTPNIIWT (91 aa)). Residues 277–297 (SIFFLFSFGFIWSWSILVIIL) traverse the membrane as a helical segment. Topologically, residues 298 to 306 (KYLSLDVKY) are extracellular. Residues 307–327 (ILMISYFFIPLHGCMNAVCFG) traverse the membrane as a helical segment. The Cytoplasmic portion of the chain corresponds to 328–515 (VNDRLRMNLK…FCTIDEDETK (188 aa)). Residues 362–375 (NGNNKNNKNNNGAN) are compositionally biased toward low complexity. Disordered regions lie at residues 362–409 (NGNN…YYQI) and 469–515 (NNNN…DETK). A compositionally biased stretch (acidic residues) spans 385–396 (SPDDDDDEDDDN). 2 stretches are compositionally biased toward low complexity: residues 397–407 (NNNNYSDGNYY) and 469–504 (NNNN…NNNN).

Belongs to the G-protein coupled receptor 5 family.

It is found in the membrane. Its function is as follows. Receptor for cAMP. This chain is Cyclic AMP receptor-like protein G (crlG), found in Dictyostelium discoideum (Social amoeba).